The chain runs to 1612 residues: Roundabout homolog 1 (1612 aa).

A signal peptide spans 1 to 19 (MIAEPAHFYLFGLICLCSG). The Extracellular portion of the chain corresponds to 20–858 (SRLRQEDFPP…QQISDVVRQP (839 aa)). Ig-like C2-type domains lie at 29-125 (PRIV…ASLE), 131-218 (DDFR…AELT), 223-307 (PSFV…ATLT), 312-407 (PHFV…LEVT), and 416-502 (PVIR…AYIE). An intrachain disulfide couples C50 to C108. N121 carries an N-linked (GlcNAc...) asparagine glycan. 3 disulfides stabilise this stretch: C152–C201, C244–C291, and C333–C389. N-linked (GlcNAc...) asparagine glycosylation is present at N424. Cysteines 437 and 486 form a disulfide. 3 consecutive Fibronectin type-III domains span residues 524–618 (APSK…TQDV), 637–734 (VVLH…TLEE), and 739–835 (PPRS…LDSH). N-linked (GlcNAc...) asparagine glycans are attached at residues N751, N781, and N788. A helical transmembrane segment spans residues 859–879 (AFIAGIGAACWIILMVFSIWL). The Cytoplasmic portion of the chain corresponds to 880 to 1612 (YRHRKKRNGL…NNEELEETES (733 aa)). S901 is subject to Phosphoserine. Position 909 is a phosphothreonine (T909). Y999 carries the phosphotyrosine modification. A Phosphoserine modification is found at S1016. Residue Y1034 is modified to Phosphotyrosine. The interval 1045-1068 (SNNMNNGAGDSSEKHWKPPGQQKP) is disordered. Y1075 carries the phosphotyrosine modification. Disordered stretches follow at residues 1088–1298 (RAND…ADME), 1313–1358 (EQTP…DGSF), and 1381–1612 (RRQM…ETES). The span at 1098–1107 (PYNQSYDQNT) shows a compositional bias: polar residues. Over residues 1108–1124 (GGSYNSSDRGSSTSGSQ) the composition is skewed to low complexity. The segment covering 1147-1157 (LPPPPAHPPPH) has biased composition (pro residues). T1201 carries the phosphothreonine modification. Residues 1216–1230 (YSHQSTATLTPSPQE) are compositionally biased toward polar residues. Residues 1242 to 1254 (DLGHMPHPPDRRR) are compositionally biased toward basic and acidic residues. The segment covering 1257-1268 (VSPPPPPRPISP) has biased composition (pro residues). S1258 is subject to Phosphoserine. Over residues 1283-1297 (MDTDAPEEEEDEADM) the composition is skewed to acidic residues. Low complexity predominate over residues 1345–1358 (SSGRSSVSSSDGSF). Over residues 1399–1412 (PRPTSPVSTDSNMS) the composition is skewed to polar residues. A compositionally biased stretch (basic residues) spans 1420–1431 (RPAKKQKHQPGH). The segment covering 1441–1451 (LPPPPVPPPAI) has biased composition (pro residues). Composition is skewed to basic and acidic residues over residues 1477–1502 (ARTDRSSDRKGGSYKGREALDGRQVT) and 1510–1534 (DPREAQEQPNDGKGRGTRQPKRDLP). The segment covering 1553-1562 (FPTSNNPRDP) has biased composition (polar residues). The segment covering 1563 to 1575 (SSSSSMSSRGSGS) has biased composition (low complexity). A compositionally biased stretch (acidic residues) spans 1603-1612 (NNEELEETES).

This sequence belongs to the immunoglobulin superfamily. ROBO family. Homodimer. Dimerization is mediated by the extracellular domain and is independent of SLIT liganding. Interacts with SLIT1 Interacts with SLIT2. Interacts with FLRT3. Interacts with MYO9B (via Rho-GAP domain). In terms of processing, ubiquitinated. May be deubiquitinated by USP33. As to expression, detected in embryonic thalamus neurons (at protein level). Expressed in embryonal spinal cord. Expressed in embryonal lung, and in adult lung bronchial epithelial cells of large proximal airways.

It is found in the cell membrane. The protein localises to the cell projection. Its subcellular location is the axon. The protein resides in the endoplasmic reticulum-Golgi intermediate compartment membrane. In terms of biological role, receptor for SLIT1 and SLIT2 that mediates cellular responses to molecular guidance cues in cellular migration, including axonal navigation at the ventral midline of the neural tube and projection of axons to different regions during neuronal development. Interaction with the intracellular domain of FLRT3 mediates axon attraction towards cells expressing NTN1. In axon growth cones, the silencing of the attractive effect of NTN1 by SLIT2 may require the formation of a ROBO1-DCC complex. Plays a role in the regulation of cell migration via its interaction with MYO9B; inhibits MYO9B-mediated stimulation of RHOA GTPase activity, and thereby leads to increased levels of active, GTP-bound RHOA. May be required for lung development. This is Roundabout homolog 1 (Robo1) from Mus musculus (Mouse).